Here is a 310-residue protein sequence, read N- to C-terminus: HMG box-containing protein C28F2.11 (310 aa).

The span at 69–95 (ESPSKKATSPKKATPAAVAPVEATSAV) shows a compositional bias: low complexity. The interval 69–310 (ESPSKKATSP…TTPPTAKVAN (242 aa)) is disordered. A Phosphoserine modification is found at Ser70. Thr105 carries the post-translational modification Phosphothreonine. Residues 117–187 (PKRPPSAYNL…AYEEEMAAYN (71 aa)) constitute a DNA-binding region (HMG box). Composition is skewed to basic and acidic residues over residues 131-178 (QRSE…LREA) and 200-226 (VTAE…DFSE). Ser161, Ser214, and Ser215 each carry phosphoserine. Residues Thr217 and Thr237 each carry the phosphothreonine modification. Positions 255 to 268 (STVPTSNVEPVSQP) are enriched in polar residues. Phosphoserine is present on residues Ser271, Ser278, Ser294, Ser295, and Ser297. Residues Thr302 and Thr305 each carry the phosphothreonine modification.

The protein resides in the cytoplasm. The chain is HMG box-containing protein C28F2.11 from Schizosaccharomyces pombe (strain 972 / ATCC 24843) (Fission yeast).